A 109-amino-acid chain; its full sequence is UPF0060 membrane protein PSPA7_1846 (109 aa).

The next 4 helical transmembrane spans lie at 5–25, 27–47, 59–79, and 84–104; these read LWFVLAAFCEIAGCYAFYLWL, LGKSALWVLPGLLSLSLFALL, AYAAYGGIYVAASLFWLAFVE, and LWSDWLGVALCVLGASIVLFG.

Belongs to the UPF0060 family.

It localises to the cell inner membrane. The protein is UPF0060 membrane protein PSPA7_1846 of Pseudomonas paraeruginosa (strain DSM 24068 / PA7) (Pseudomonas aeruginosa (strain PA7)).